Consider the following 351-residue polypeptide: Nicotinate-nucleotide--dimethylbenzimidazole phosphoribosyltransferase (351 aa).

Residue Glu318 is the Proton acceptor of the active site.

The protein belongs to the CobT family.

It catalyses the reaction 5,6-dimethylbenzimidazole + nicotinate beta-D-ribonucleotide = alpha-ribazole 5'-phosphate + nicotinate + H(+). It participates in nucleoside biosynthesis; alpha-ribazole biosynthesis; alpha-ribazole from 5,6-dimethylbenzimidazole: step 1/2. Functionally, catalyzes the synthesis of alpha-ribazole-5'-phosphate from nicotinate mononucleotide (NAMN) and 5,6-dimethylbenzimidazole (DMB). This is Nicotinate-nucleotide--dimethylbenzimidazole phosphoribosyltransferase from Chloroflexus aurantiacus (strain ATCC 29366 / DSM 635 / J-10-fl).